Here is a 689-residue protein sequence, read N- to C-terminus: Glycine--tRNA ligase beta subunit (689 aa).

This sequence belongs to the class-II aminoacyl-tRNA synthetase family. In terms of assembly, tetramer of two alpha and two beta subunits.

It localises to the cytoplasm. It carries out the reaction tRNA(Gly) + glycine + ATP = glycyl-tRNA(Gly) + AMP + diphosphate. The chain is Glycine--tRNA ligase beta subunit from Pseudoalteromonas translucida (strain TAC 125).